Reading from the N-terminus, the 176-residue chain is uncharacterized protein (176 aa).

Residues 1–12 (MRLPYSSSKPIP) are compositionally biased toward polar residues. 2 disordered regions span residues 1–88 (MRLP…PQQQ) and 109–132 (VNNS…PSSS). Positions 13–24 (TNNNNNNNNTNN) are enriched in low complexity. Polar residues predominate over residues 37–46 (SYYQTQENNK). Residues 47–88 (PQQSQQHPLLQHQQQQQQQQQQQQQQQQQQQQQQQQQQPQQQ) are compositionally biased toward low complexity.

This is an uncharacterized protein from Dictyostelium discoideum (Social amoeba).